Reading from the N-terminus, the 426-residue chain is Glutamate-1-semialdehyde 2,1-aminomutase (426 aa).

Lysine 265 bears the N6-(pyridoxal phosphate)lysine mark.

The protein belongs to the class-III pyridoxal-phosphate-dependent aminotransferase family. HemL subfamily. As to quaternary structure, homodimer. Requires pyridoxal 5'-phosphate as cofactor.

It localises to the cytoplasm. The catalysed reaction is (S)-4-amino-5-oxopentanoate = 5-aminolevulinate. It functions in the pathway porphyrin-containing compound metabolism; protoporphyrin-IX biosynthesis; 5-aminolevulinate from L-glutamyl-tRNA(Glu): step 2/2. The sequence is that of Glutamate-1-semialdehyde 2,1-aminomutase from Actinobacillus pleuropneumoniae serotype 3 (strain JL03).